Consider the following 77-residue polypeptide: Small ribosomal subunit protein bS16 (77 aa).

Belongs to the bacterial ribosomal protein bS16 family.

The chain is Small ribosomal subunit protein bS16 from Wolinella succinogenes (strain ATCC 29543 / DSM 1740 / CCUG 13145 / JCM 31913 / LMG 7466 / NCTC 11488 / FDC 602W) (Vibrio succinogenes).